The sequence spans 78 residues: EAALHLEKGLNQALVDLHALGSARADPHLCDFLENHFLDEEVKLIKKMGDHLTNLRRLSGPQAGLGEYLFERLTLKHD.

Residues 1-59 form the Ferritin-like diiron domain; that stretch reads EAALHLEKGLNQALVDLHALGSARADPHLCDFLENHFLDEEVKLIKKMGDHLTNLRRLS.

This sequence belongs to the ferritin family. As to quaternary structure, oligomer of 24 subunits. There are two types of subunits: L (light) chain and H (heavy) chain. The major chain can be light or heavy, depending on the species and tissue type. The functional molecule forms a roughly spherical shell with a diameter of 12 nm and contains a central cavity into which the insoluble mineral iron core is deposited. Interacts with NCOA4.

Its subcellular location is the cytoplasmic vesicle. The protein localises to the autophagosome. It is found in the cytoplasm. It localises to the autolysosome. Functionally, stores iron in a soluble, non-toxic, readily available form. Important for iron homeostasis. Iron is taken up in the ferrous form and deposited as ferric hydroxides after oxidation. Also plays a role in delivery of iron to cells. Mediates iron uptake in capsule cells of the developing kidney. Delivery to lysosomes by the cargo receptor NCOA4 for autophagic degradation and release or iron. The sequence is that of Ferritin light chain (FTL) from Sus scrofa (Pig).